Reading from the N-terminus, the 189-residue chain is UPF0301 protein RMA_0049 (189 aa).

It belongs to the UPF0301 (AlgH) family.

This is UPF0301 protein RMA_0049 from Rickettsia massiliae (strain Mtu5).